Reading from the N-terminus, the 435-residue chain is Serine--tRNA ligase (435 aa).

L-serine is bound at residue 233–235; sequence TAE. Residue 264-266 coordinates ATP; the sequence is RAE. Position 287 (Glu287) interacts with L-serine. ATP is bound at residue 351 to 354; it reads EISS. Ser386 is a binding site for L-serine.

The protein belongs to the class-II aminoacyl-tRNA synthetase family. Type-1 seryl-tRNA synthetase subfamily. Homodimer. The tRNA molecule binds across the dimer.

It is found in the cytoplasm. The enzyme catalyses tRNA(Ser) + L-serine + ATP = L-seryl-tRNA(Ser) + AMP + diphosphate + H(+). The catalysed reaction is tRNA(Sec) + L-serine + ATP = L-seryl-tRNA(Sec) + AMP + diphosphate + H(+). It functions in the pathway aminoacyl-tRNA biosynthesis; selenocysteinyl-tRNA(Sec) biosynthesis; L-seryl-tRNA(Sec) from L-serine and tRNA(Sec): step 1/1. In terms of biological role, catalyzes the attachment of serine to tRNA(Ser). Is also able to aminoacylate tRNA(Sec) with serine, to form the misacylated tRNA L-seryl-tRNA(Sec), which will be further converted into selenocysteinyl-tRNA(Sec). The polypeptide is Serine--tRNA ligase (Anaeromyxobacter sp. (strain K)).